Consider the following 78-residue polypeptide: uncharacterized protein (78 aa).

A disordered region spans residues 51–78 (GGKWDGGGSGGKWNGGGGSGGGSWKKWN).

This is an uncharacterized protein from Dictyostelium discoideum (Social amoeba).